The chain runs to 205 residues: Glutathione peroxidase 1 (205 aa).

Serine 37 carries the post-translational modification Phosphoserine. Selenocysteine 52 is an active-site residue. Position 52 (selenocysteine 52) is a non-standard amino acid, selenocysteine. 2 positions are modified to N6-acetyllysine; alternate: lysine 91 and lysine 117. N6-succinyllysine; alternate is present on residues lysine 91 and lysine 117. An N-linked (Glc) (glycation) lysine; in vitro glycan is attached at lysine 117. Lysine 124 bears the N6-acetyllysine mark. Lysine 151 is subject to N6-acetyllysine; alternate. Lysine 151 carries the post-translational modification N6-succinyllysine; alternate. Phosphoserine occurs at positions 200 and 204.

It belongs to the glutathione peroxidase family. As to quaternary structure, homotetramer. Interacts with MIEN1. During periods of oxidative stress, Sec-52 may react with a superoxide radical, irreversibly lose hydroselenide and be converted to dehydroalanine.

The protein resides in the cytoplasm. The protein localises to the mitochondrion. It catalyses the reaction 2 glutathione + H2O2 = glutathione disulfide + 2 H2O. The enzyme catalyses a hydroperoxy polyunsaturated fatty acid + 2 glutathione = a hydroxy polyunsaturated fatty acid + glutathione disulfide + H2O. It carries out the reaction tert-butyl hydroperoxide + 2 glutathione = tert-butanol + glutathione disulfide + H2O. The catalysed reaction is cumene hydroperoxide + 2 glutathione = 2-phenylpropan-2-ol + glutathione disulfide + H2O. It catalyses the reaction (13S)-hydroperoxy-(9Z,11E)-octadecadienoate + 2 glutathione = (13S)-hydroxy-(9Z,11E)-octadecadienoate + glutathione disulfide + H2O. The enzyme catalyses (9S)-hydroperoxy-(10E,12Z)-octadecadienoate + 2 glutathione = (9S)-hydroxy-(10E,12Z)-octadecadienoate + glutathione disulfide + H2O. It carries out the reaction (5S)-hydroperoxy-(6E,8Z,11Z,14Z)-eicosatetraenoate + 2 glutathione = (5S)-hydroxy-(6E,8Z,11Z,14Z)-eicosatetraenoate + glutathione disulfide + H2O. The catalysed reaction is (12S)-hydroperoxy-(5Z,8Z,10E,14Z)-eicosatetraenoate + 2 glutathione = (12S)-hydroxy-(5Z,8Z,10E,14Z)-eicosatetraenoate + glutathione disulfide + H2O. It catalyses the reaction (12R)-hydroperoxy-(5Z,8Z,10E,14Z)-eicosatetraenoate + 2 glutathione = (12R)-hydroxy-(5Z,8Z,10E,14Z)-eicosatetraenoate + glutathione disulfide + H2O. The enzyme catalyses (15S)-hydroperoxy-(5Z,8Z,11Z,13E)-eicosatetraenoate + 2 glutathione = (15S)-hydroxy-(5Z,8Z,11Z,13E)-eicosatetraenoate + glutathione disulfide + H2O. It carries out the reaction (5S)-hydroperoxy-(6E,8Z,11Z,14Z,17Z)-eicosapentaenoate + 2 glutathione = (5S)-hydroxy-(6E,8Z,11Z,14Z,17Z)-eicosapentaenoate + glutathione disulfide + H2O. The catalysed reaction is (15S)-hydroperoxy-(5Z,8Z,11Z,13E,17Z)-eicosapentaenoate + 2 glutathione = (15S)-hydroxy-(5Z,8Z,11Z,13E,17Z)-eicosapentaenoate + glutathione disulfide + H2O. It catalyses the reaction (15S)-hydroperoxy-(11Z,13E)-eicosadienoate + 2 glutathione = (15S)-hydroxy-(11Z,13E)-eicosadienoate + glutathione disulfide + H2O. The enzyme catalyses (17S)-hydroperoxy-(4Z,7Z,10Z,13Z,15E,19Z)-docosahexaenoate + 2 glutathione = (17S)-hydroxy-(4Z,7Z,10Z,13Z,15E,19Z)-docosahexaenoate + glutathione disulfide + H2O. Its function is as follows. Catalyzes the reduction of hydroperoxides in a glutathione-dependent manner thus regulating cellular redox homeostasis. Can reduce small soluble hydroperoxides such as H2O2, cumene hydroperoxide and tert-butyl hydroperoxide, as well as several fatty acid-derived hydroperoxides. In platelets catalyzes the reduction of 12-hydroperoxyeicosatetraenoic acid, the primary product of the arachidonate 12-lipoxygenase pathway. The polypeptide is Glutathione peroxidase 1 (GPX1) (Bos taurus (Bovine)).